Consider the following 392-residue polypeptide: Outer membrane protein assembly factor BamB (392 aa).

The N-terminal stretch at 1-19 (MQLRKLLLPGLLSVTLLSG) is a signal peptide. Residue Cys20 is the site of N-palmitoyl cysteine attachment. A lipid anchor (S-diacylglycerol cysteine) is attached at Cys20.

It belongs to the BamB family. As to quaternary structure, part of the Bam complex, which is composed of the outer membrane protein BamA, and four lipoproteins BamB, BamC, BamD and BamE. Monomer. Interacts directly with BamA. The Bam complex has the shape of a hat, with the BamA beta-barrel crown in the outer membrane and the periplasmic brim formed by the BamA POTRA domains and the 4 lipoproteins.

It is found in the cell outer membrane. Functionally, part of the outer membrane protein assembly complex (Bam), which is involved in assembly and insertion of beta-barrel proteins into the outer membrane. Nonessential member of the complex, which may orient the flexible periplasmic domain of BamA for interaction with other Bam components, chaperones and nascent outer membrane proteins. Efficient substrate folding and insertion into the outer membrane requires all 5 subunits. A lateral gate may open between the first and last strands of the BamA beta-barrel that allows substrate to insert into the outer membrane; comparison of the structures of complete and nearly complete Bam complexes show there is considerable movement of all 5 proteins. The protein is Outer membrane protein assembly factor BamB of Escherichia coli (strain K12).